The following is a 1144-amino-acid chain: Guanine nucleotide-binding protein G(s) subunit alpha isoforms XLas (1144 aa).

Disordered regions lie at residues 1–186 (MGML…LAPG), 316–558 (DDDT…PAAG), 622–657 (SASA…SAWP), and 735–772 (RSRS…DKKR). The segment covering 31–46 (LEAQGAAAPGAGVGPA) has biased composition (low complexity). The span at 343-356 (KSEHAKRPPLERQA) shows a compositional bias: basic and acidic residues. The span at 358–369 (ETGNSPISSTTA) shows a compositional bias: polar residues. The span at 370-381 (EEAKVPSLERGE) shows a compositional bias: basic and acidic residues. 2 stretches are compositionally biased toward low complexity: residues 467–499 (PAAA…AAEA) and 518–558 (EPAA…PAAG). Positions 644–654 (PPTPRPAPRPS) are enriched in pro residues. Residues 743 to 767 (KAKDPMEERRKQMRKEAMEMREQKR) show a composition bias toward basic and acidic residues. Residues 745-772 (KDPMEERRKQMRKEAMEMREQKRADKKR) adopt a coiled-coil conformation. Residues 789-1144 (CTHRLLLLGA…RMHLRQYELL (356 aa)) enclose the G-alpha domain. The tract at residues 792–805 (RLLLLGAGESGKST) is G1 motif. Position 797 to 805 (797 to 805 (GAGESGKST)) interacts with GTP. Residue S804 coordinates Mg(2+). The tract at residues 818–840 (FNGEGGEEDPQAARSNSDGEKAT) is disordered. The stretch at 837 to 863 (EKATKVQDIKNNLKEAIETIVAAMSNL) forms a coiled coil. The G2 motif stretch occupies residues 946-954 (DLPRCRVLT). GTP is bound by residues 947-954 (LPRCRVLT), 973-977 (DVGGQ), and 1042-1045 (NKQD). ADP-ribosylarginine; by cholera toxin is present on R951. Residue T954 participates in Mg(2+) binding. The G3 motif stretch occupies residues 969-978 (FHMFDVGGQR). A G4 motif region spans residues 1038–1045 (ILFLNKQD). At S1102 the chain carries Phosphoserine. Residues 1114 to 1119 (TCAVDT) form a G5 motif region. A1116 lines the GTP pocket.

It belongs to the G-alpha family. G(s) subfamily. G proteins are composed of 3 units; alpha, beta and gamma. The alpha chain contains the guanine nucleotide binding site. Interacts through its N-terminal region with ALEX which is produced from the same locus in a different open reading frame. This interaction may inhibit its adenylyl cyclase-stimulating activity. Interacts with MAGED2. As to expression, enriched in neuroendocrine tissues with a particularly high level of expression in pituitary where it is abundant in intermediate and anterior lobes. In adrenal gland, found in central region containing medullary chromaffin cells but not in cortex. In cerebellum, strongly expressed in perikarya of Purkinje cells. Not detected in liver, kidney or neurohypophysis.

The protein resides in the cell membrane. Its subcellular location is the apical cell membrane. Its function is as follows. Guanine nucleotide-binding proteins (G proteins) function as transducers in numerous signaling pathways controlled by G protein-coupled receptors (GPCRs). Signaling involves the activation of adenylyl cyclases, resulting in increased levels of the signaling molecule cAMP. GNAS functions downstream of several GPCRs, including beta-adrenergic receptors. XLas isoforms interact with the same set of receptors as Gnas isoforms. In Rattus norvegicus (Rat), this protein is Guanine nucleotide-binding protein G(s) subunit alpha isoforms XLas.